We begin with the raw amino-acid sequence, 1474 residues long: Alpha-2-macroglobulin-P (1474 aa).

The first 32 residues, 1 to 32, serve as a signal peptide directing secretion; the sequence is MGKRWLPSLALLPLPPPLLLLLLLLLPTNASA. Cys55 and Cys93 form a disulfide bridge. Residues Asn62, Asn77, and Asn253 are each glycosylated (N-linked (GlcNAc...) asparagine). Cystine bridges form between Cys257-Cys305 and Cys275-Cys293. Asn402 carries an N-linked (GlcNAc...) asparagine glycan. Cystine bridges form between Cys476–Cys569, Cys601–Cys771, and Cys650–Cys697. The bait region stretch occupies residues 623-752; that stretch reads LVYDLLPVKD…LVIVDSTGVA (130 aa). 2 N-linked (GlcNAc...) asparagine glycosylation sites follow: Asn654 and Asn774. Intrachain disulfides connect Cys821/Cys849, Cys847/Cys883, Cys921/Cys1321, Cys1079/Cys1127, and Cys1352/Cys1467. N-linked (GlcNAc...) asparagine glycosylation is present at Asn869. Residues 972-975 constitute a cross-link (isoglutamyl cysteine thioester (Cys-Gln)); sequence CGEQ. Asn991 carries an N-linked (GlcNAc...) asparagine glycan. The N-linked (GlcNAc...) asparagine glycan is linked to Asn1366.

This sequence belongs to the protease inhibitor I39 (alpha-2-macroglobulin) family. Homotetramer; disulfide-linked. Expressed in uterus, mesometrial lymphoid aggregate and mammary tissue during pregnancy. Expressed in ovary, testis and kidney. Low level expression in heart. Not expressed in liver.

The protein resides in the secreted. Is able to inhibit all four classes of proteinases by a unique 'trapping' mechanism. This protein has a peptide stretch, called the 'bait region' which contains specific cleavage sites for different proteinases. When a proteinase cleaves the bait region, a conformational change is induced in the protein which traps the proteinase. The entrapped enzyme remains active against low molecular weight substrates (activity against high molecular weight substrates is greatly reduced). Following cleavage in the bait region a thioester bond is hydrolyzed and mediates the covalent binding of the protein to the proteinase. The chain is Alpha-2-macroglobulin-P from Mus musculus (Mouse).